The primary structure comprises 188 residues: Putative adenylate kinase (188 aa).

ATP contacts are provided by Gly10, Gly12, Lys13, Ser14, and Thr15. Residues 30–53 form an NMP region; the sequence is HVSSFLIQNKAFSEYDELRQSYVI. An LID region spans residues 103–113; the sequence is RRGWGELKIAE. Residues Arg104 and Lys142 each contribute to the ATP site.

The protein belongs to the adenylate kinase family. AK6 subfamily. As to quaternary structure, interacts with uS11. Not a structural component of 40S pre-ribosomes, but transiently interacts with them by binding to uS11.

The enzyme catalyses AMP + ATP = 2 ADP. It carries out the reaction ATP + H2O = ADP + phosphate + H(+). Broad-specificity nucleoside monophosphate (NMP) kinase that catalyzes the reversible transfer of the terminal phosphate group between nucleoside triphosphates and monophosphates. Also has ATPase activity. Involved in the late maturation steps of the 30S ribosomal particles, specifically 16S rRNA maturation. While NMP activity is not required for ribosome maturation, ATPase activity is. Associates transiently with small ribosomal subunit protein uS11. ATP hydrolysis breaks the interaction with uS11. May temporarily remove uS11 from the ribosome to enable a conformational change of the ribosomal RNA that is needed for the final maturation step of the small ribosomal subunit. The polypeptide is Putative adenylate kinase (Sulfurisphaera tokodaii (strain DSM 16993 / JCM 10545 / NBRC 100140 / 7) (Sulfolobus tokodaii)).